A 181-amino-acid polypeptide reads, in one-letter code: Inner membrane-spanning protein YciB (181 aa).

5 helical membrane passes run 3–23, 49–69, 76–96, 119–139, and 149–169; these read FLFDLFPVILFFITFKIYGIY, TMLWVSLVLIVVFGSATLILQ, WKPSVLYWLFAAALLIAQAIF, VNASWAAFFAFMGAANLYVAF, and FKLFGFMGLMLVFVVLQGLML.

Belongs to the YciB family.

The protein localises to the cell inner membrane. Plays a role in cell envelope biogenesis, maintenance of cell envelope integrity and membrane homeostasis. The polypeptide is Inner membrane-spanning protein YciB (Nitrosospira multiformis (strain ATCC 25196 / NCIMB 11849 / C 71)).